We begin with the raw amino-acid sequence, 397 residues long: Argininosuccinate synthase (397 aa).

9–17 provides a ligand contact to ATP; it reads AYSGGLDTT. Tyrosine 87 is an L-citrulline binding site. ATP is bound at residue glycine 117. Positions 119, 123, and 124 each coordinate L-aspartate. Asparagine 123 lines the L-citrulline pocket. Positions 127, 174, 183, 259, and 271 each coordinate L-citrulline.

This sequence belongs to the argininosuccinate synthase family. Type 1 subfamily. In terms of assembly, homotetramer.

The protein localises to the cytoplasm. It carries out the reaction L-citrulline + L-aspartate + ATP = 2-(N(omega)-L-arginino)succinate + AMP + diphosphate + H(+). Its pathway is amino-acid biosynthesis; L-arginine biosynthesis; L-arginine from L-ornithine and carbamoyl phosphate: step 2/3. The chain is Argininosuccinate synthase from Pyrobaculum aerophilum (strain ATCC 51768 / DSM 7523 / JCM 9630 / CIP 104966 / NBRC 100827 / IM2).